Here is a 321-residue protein sequence, read N- to C-terminus: Phosphatidate cytidylyltransferase, mitochondrial (321 aa).

Belongs to the TAM41 family. Requires Mg(2+) as cofactor. Co(2+) is required as a cofactor. It depends on Cu(2+) as a cofactor.

The protein resides in the mitochondrion inner membrane. It carries out the reaction a 1,2-diacyl-sn-glycero-3-phosphate + CTP + H(+) = a CDP-1,2-diacyl-sn-glycerol + diphosphate. The protein operates within phospholipid metabolism; CDP-diacylglycerol biosynthesis; CDP-diacylglycerol from sn-glycerol 3-phosphate: step 3/3. Catalyzes the formation of CDP-diacylglycerol (CDP-DAG) from phosphatidic acid (PA) in the mitochondrial inner membrane. Required for the biosynthesis of the dimeric phospholipid cardiolipin, which stabilizes supercomplexes of the mitochondrial respiratory chain in the mitochondrial inner membrane. This Caenorhabditis briggsae protein is Phosphatidate cytidylyltransferase, mitochondrial.